The sequence spans 295 residues: MSWLSKLMPSGIRTENTPAKKRSVPEGLWEKCSNCGSALYGPELEENLEVCPKCDHHMAIRARARLNSLFDPDTATTEIAAQLGPVDVLKFKDQKRYGERIKASQKASGEYDALIAMRGTLKGNPLVAAAFDFAFMGGSMGSVVGERFARAAEVALEVGCPFVCFSASGGARMQEGLFSLMQMAKTSAALGRLREAGLPYISVLTHPTTGGVSASFAMLGDINIAEPHALIGFAGPRVIEQTVRETLPEGFQRSEFLLDHGAIDQICDRREMRNRIAELTAMMMRQPHPQDADAA.

A disordered region spans residues 1–20; sequence MSWLSKLMPSGIRTENTPAK. Residues 28–295 form the CoA carboxyltransferase N-terminal domain; the sequence is LWEKCSNCGS…QPHPQDADAA (268 aa). Positions 32, 35, 51, and 54 each coordinate Zn(2+). The segment at 32-54 adopts a C4-type zinc-finger fold; that stretch reads CSNCGSALYGPELEENLEVCPKC.

Belongs to the AccD/PCCB family. Acetyl-CoA carboxylase is a heterohexamer composed of biotin carboxyl carrier protein (AccB), biotin carboxylase (AccC) and two subunits each of ACCase subunit alpha (AccA) and ACCase subunit beta (AccD). Zn(2+) serves as cofactor.

The protein resides in the cytoplasm. It catalyses the reaction N(6)-carboxybiotinyl-L-lysyl-[protein] + acetyl-CoA = N(6)-biotinyl-L-lysyl-[protein] + malonyl-CoA. It participates in lipid metabolism; malonyl-CoA biosynthesis; malonyl-CoA from acetyl-CoA: step 1/1. Functionally, component of the acetyl coenzyme A carboxylase (ACC) complex. Biotin carboxylase (BC) catalyzes the carboxylation of biotin on its carrier protein (BCCP) and then the CO(2) group is transferred by the transcarboxylase to acetyl-CoA to form malonyl-CoA. This chain is Acetyl-coenzyme A carboxylase carboxyl transferase subunit beta, found in Xanthomonas oryzae pv. oryzae (strain MAFF 311018).